The sequence spans 412 residues: Alanyl-tRNA editing protein Aarsd1-B (412 aa).

Zn(2+)-binding residues include His108, His112, Cys208, and His212.

This sequence belongs to the class-II aminoacyl-tRNA synthetase family. Alax-L subfamily. Requires Zn(2+) as cofactor.

The protein resides in the cytoplasm. In terms of biological role, functions in trans to edit the amino acid moiety from incorrectly charged tRNA(Ala). This Xenopus laevis (African clawed frog) protein is Alanyl-tRNA editing protein Aarsd1-B (aarsd1-b).